Reading from the N-terminus, the 218-residue chain is UPF0177 protein YaiF (218 aa).

The next 5 helical transmembrane spans lie at 8–28, 48–68, 81–101, 123–143, and 163–183; these read SIII…AVFL, FIIL…KCGF, ILLI…VVQF, ILSS…APIL, and FFLS…DILG.

It belongs to the UPF0177 family.

Its subcellular location is the cell membrane. This chain is UPF0177 protein YaiF (yaiF), found in Lactococcus lactis subsp. lactis (strain IL1403) (Streptococcus lactis).